Consider the following 382-residue polypeptide: MAPTQSKVRIHNLAEAHEKTLRAFPIEVEQNPEGKKLLVKQIRIRTLGHADHSNDSICFLNTYGFIKEAVSQTEFMRAGQKSESKNTLTACMLPFGPGPNIGSPQKMLEYAEDIKIHVRKTAGCKEQIVFSLDRTPQVFRGFQFPRDRYACVPSDKYIKSPGKLVAGPNYCYIITFLSLTFCPSSQKFKVPRPVLNFRSTRMRGIHLEIIMKITCSENSPIRKTLITDDLENGPKASVWIHLCNLYKGRNPIKIYDEAYFAEKCKQMLLSVGISDLWGPTIAVHANGKIPKSASLYFNSRGWALHPIADASPTMAKQLWSIGCEIMEVNAILQGSDYSALVDHPDVIYRKIRIDPAKKQYAHSKWNPFKKAISMPNLTDDSI.

This sequence belongs to the morbillivirus/respirovirus/rubulavirus M protein family.

It localises to the virion. Its function is as follows. The M protein has a crucial role in virus assembly and interacts with the RNP complex as well as with the viral membrane. The chain is Matrix protein (M) from Homo sapiens (Human).